The following is a 456-amino-acid chain: tRNA-2-methylthio-N(6)-dimethylallyladenosine synthase (456 aa).

Positions 17–135 constitute an MTTase N-terminal domain; it reads KLYLIQSFGC…LPRMIHQVQE (119 aa). C26, C62, C96, C172, C176, and C179 together coordinate [4Fe-4S] cluster. The Radical SAM core domain occupies 158–387; the sequence is RKDKLKAWVT…IELQNLISLE (230 aa). The region spanning 390 to 453 is the TRAM domain; the sequence is QREEGRVLEV…PNLLEGEVVP (64 aa).

It belongs to the methylthiotransferase family. MiaB subfamily. As to quaternary structure, monomer. [4Fe-4S] cluster serves as cofactor.

It localises to the cytoplasm. The catalysed reaction is N(6)-dimethylallyladenosine(37) in tRNA + (sulfur carrier)-SH + AH2 + 2 S-adenosyl-L-methionine = 2-methylsulfanyl-N(6)-dimethylallyladenosine(37) in tRNA + (sulfur carrier)-H + 5'-deoxyadenosine + L-methionine + A + S-adenosyl-L-homocysteine + 2 H(+). Its function is as follows. Catalyzes the methylthiolation of N6-(dimethylallyl)adenosine (i(6)A), leading to the formation of 2-methylthio-N6-(dimethylallyl)adenosine (ms(2)i(6)A) at position 37 in tRNAs that read codons beginning with uridine. The chain is tRNA-2-methylthio-N(6)-dimethylallyladenosine synthase from Desulforamulus reducens (strain ATCC BAA-1160 / DSM 100696 / MI-1) (Desulfotomaculum reducens).